A 185-amino-acid chain; its full sequence is MKNQEIIEVKSKMFLRIWAFVGSAGMGLACLWLFYMGITFQTKYYLLAIPAGFLFTLFCLYLFIIFFPAFTPRGNTIFRIKTGKNGEVFTDKVSVTFTDIKKIEMSRHKFSLKGIFQEDILIQTVDQKTIRIPTWNIIPNPLFFEAVERYILPHLNEEAKSNWIGQFTDIQRSAYLKEFENHPKL.

Residues 1–29 (MKNQEIIEVKSKMFLRIWAFVGSAGMGLA) form the signal peptide. Cys-30 carries N-palmitoyl cysteine lipidation. Cys-30 carries S-diacylglycerol cysteine lipidation. A helical transmembrane segment spans residues 45 to 67 (YLLAIPAGFLFTLFCLYLFIIFF).

The protein to B.subtilis YfjE.

It is found in the cell membrane. This is an uncharacterized protein from Bacillus subtilis (strain 168).